Here is a 63-residue protein sequence, read N- to C-terminus: Conotoxin Vi5.1a (63 aa).

The signal sequence occupies residues 1–22 (MRCVPVFIILLLLIPSAPSADA). A propeptide spanning residues 23 to 50 (QPKTKDDVPLASYHDNAERTLQRLWNQR) is cleaved from the precursor. Proline 62 is modified (proline amide).

It belongs to the conotoxin T superfamily. Contains 2 disulfide bonds that can be either 'C1-C3, C2-C4' or 'C1-C4, C2-C3', since these disulfide connectivities have been observed for conotoxins with cysteine framework V (for examples, see AC P0DQQ7 and AC P81755). As to expression, expressed by the venom duct.

It is found in the secreted. The protein is Conotoxin Vi5.1a of Conus virgo (Virgin cone).